The following is a 263-amino-acid chain: Hydroxyethylthiazole kinase (263 aa).

M45 lines the substrate pocket. ATP is bound by residues R121 and S167. Residue G194 coordinates substrate.

The protein belongs to the Thz kinase family. It depends on Mg(2+) as a cofactor.

The catalysed reaction is 5-(2-hydroxyethyl)-4-methylthiazole + ATP = 4-methyl-5-(2-phosphooxyethyl)-thiazole + ADP + H(+). The protein operates within cofactor biosynthesis; thiamine diphosphate biosynthesis; 4-methyl-5-(2-phosphoethyl)-thiazole from 5-(2-hydroxyethyl)-4-methylthiazole: step 1/1. Its function is as follows. Catalyzes the phosphorylation of the hydroxyl group of 4-methyl-5-beta-hydroxyethylthiazole (THZ). This chain is Hydroxyethylthiazole kinase, found in Vibrio parahaemolyticus serotype O3:K6 (strain RIMD 2210633).